Here is a 334-residue protein sequence, read N- to C-terminus: Cytoplasmic envelopment protein 2 (334 aa).

Belongs to the herpesviridae cytoplasmic envelopment protein 2 family. As to quaternary structure, interacts with cytoplasmic envelopment protein 3 and with the capsid.

The protein resides in the virion tegument. The protein localises to the host cytoplasm. It localises to the host nucleus. Plays a critical role in cytoplasmic virus egress. Participates in the final step of tegumentation and envelope acquisition within the host cytoplasm by directly interacting with the capsid. Upon virion binding to target cell, a signaling cascade is triggered to disrupt the interaction with the capsid, thereby preparing capsid uncoating. The protein is Cytoplasmic envelopment protein 2 (ORF33) of Homo sapiens (Human).